The sequence spans 158 residues: Small ribosomal subunit protein uS9 (158 aa).

It belongs to the universal ribosomal protein uS9 family.

The protein is Small ribosomal subunit protein uS9 of Nitrobacter hamburgensis (strain DSM 10229 / NCIMB 13809 / X14).